Consider the following 90-residue polypeptide: Small ribosomal subunit protein uS15 (90 aa).

The protein belongs to the universal ribosomal protein uS15 family. Part of the 30S ribosomal subunit. Forms a bridge to the 50S subunit in the 70S ribosome, contacting the 23S rRNA.

Functionally, one of the primary rRNA binding proteins, it binds directly to 16S rRNA where it helps nucleate assembly of the platform of the 30S subunit by binding and bridging several RNA helices of the 16S rRNA. In terms of biological role, forms an intersubunit bridge (bridge B4) with the 23S rRNA of the 50S subunit in the ribosome. The polypeptide is Small ribosomal subunit protein uS15 (Paraburkholderia xenovorans (strain LB400)).